The primary structure comprises 297 residues: 33 kDa chaperonin (297 aa).

Intrachain disulfides connect Cys-232–Cys-234 and Cys-266–Cys-269.

This sequence belongs to the HSP33 family. Post-translationally, under oxidizing conditions two disulfide bonds are formed involving the reactive cysteines. Under reducing conditions zinc is bound to the reactive cysteines and the protein is inactive.

It localises to the cytoplasm. Its function is as follows. Redox regulated molecular chaperone. Protects both thermally unfolding and oxidatively damaged proteins from irreversible aggregation. Plays an important role in the bacterial defense system toward oxidative stress. The polypeptide is 33 kDa chaperonin (Azotobacter vinelandii (strain DJ / ATCC BAA-1303)).